Here is a 248-residue protein sequence, read N- to C-terminus: Probable succinyl-CoA:3-ketoacid coenzyme A transferase subunit A (248 aa).

CoA is bound at residue G24–G30.

Belongs to the 3-oxoacid CoA-transferase subunit A family. Heterodimer of a subunit A and a subunit B.

It carries out the reaction a 3-oxo acid + succinyl-CoA = a 3-oxoacyl-CoA + succinate. The chain is Probable succinyl-CoA:3-ketoacid coenzyme A transferase subunit A (scoA) from Mycobacterium bovis (strain ATCC BAA-935 / AF2122/97).